Here is a 130-residue protein sequence, read N- to C-terminus: Small ribosomal subunit protein uS11 (130 aa).

The tract at residues 1-21 (MAPQSKRSGGRKQKKHVPNGV) is disordered. Residues 8 to 17 (SGGRKQKKHV) are compositionally biased toward basic residues.

This sequence belongs to the universal ribosomal protein uS11 family. In terms of assembly, part of the 30S ribosomal subunit. Interacts with proteins S7 and S18. Binds to IF-3.

Functionally, located on the platform of the 30S subunit, it bridges several disparate RNA helices of the 16S rRNA. Forms part of the Shine-Dalgarno cleft in the 70S ribosome. This chain is Small ribosomal subunit protein uS11, found in Acaryochloris marina (strain MBIC 11017).